We begin with the raw amino-acid sequence, 223 residues long: Ribose-5-phosphate isomerase A (223 aa).

Substrate-binding positions include 32–35 (TGST), 85–88 (DGAD), and 98–101 (KGGG). Glu107 functions as the Proton acceptor in the catalytic mechanism. Lys125 is a binding site for substrate.

Belongs to the ribose 5-phosphate isomerase family. Homodimer.

The enzyme catalyses aldehydo-D-ribose 5-phosphate = D-ribulose 5-phosphate. Its pathway is carbohydrate degradation; pentose phosphate pathway; D-ribose 5-phosphate from D-ribulose 5-phosphate (non-oxidative stage): step 1/1. Its function is as follows. Catalyzes the reversible conversion of ribose-5-phosphate to ribulose 5-phosphate. The protein is Ribose-5-phosphate isomerase A of Pseudomonas fluorescens (strain ATCC BAA-477 / NRRL B-23932 / Pf-5).